The primary structure comprises 144 residues: Large ribosomal subunit protein uL14 (144 aa).

The disordered stretch occupies residues 107–144 (NEGYTHSQHSNQREGGERIQAQPSPPHARRAVKTSFCR).

Belongs to the universal ribosomal protein uL14 family. In terms of assembly, part of the 50S ribosomal subunit. Forms a cluster with proteins L3 and L19. In the 70S ribosome, L14 and L19 interact and together make contacts with the 16S rRNA in bridges B5 and B8.

In terms of biological role, binds to 23S rRNA. Forms part of two intersubunit bridges in the 70S ribosome. The sequence is that of Large ribosomal subunit protein uL14 from Xanthobacter autotrophicus (strain ATCC BAA-1158 / Py2).